Here is a 206-residue protein sequence, read N- to C-terminus: Thiamine-phosphate synthase (206 aa).

Residues 35–39 (QLRHK) and N67 each bind 4-amino-2-methyl-5-(diphosphooxymethyl)pyrimidine. Mg(2+)-binding residues include D68 and D87. S106 provides a ligand contact to 4-amino-2-methyl-5-(diphosphooxymethyl)pyrimidine. Residue 132-134 (TGS) participates in 2-[(2R,5Z)-2-carboxy-4-methylthiazol-5(2H)-ylidene]ethyl phosphate binding. Residue K135 participates in 4-amino-2-methyl-5-(diphosphooxymethyl)pyrimidine binding. 2-[(2R,5Z)-2-carboxy-4-methylthiazol-5(2H)-ylidene]ethyl phosphate is bound at residue G163.

It belongs to the thiamine-phosphate synthase family. Requires Mg(2+) as cofactor.

It catalyses the reaction 2-[(2R,5Z)-2-carboxy-4-methylthiazol-5(2H)-ylidene]ethyl phosphate + 4-amino-2-methyl-5-(diphosphooxymethyl)pyrimidine + 2 H(+) = thiamine phosphate + CO2 + diphosphate. The catalysed reaction is 2-(2-carboxy-4-methylthiazol-5-yl)ethyl phosphate + 4-amino-2-methyl-5-(diphosphooxymethyl)pyrimidine + 2 H(+) = thiamine phosphate + CO2 + diphosphate. It carries out the reaction 4-methyl-5-(2-phosphooxyethyl)-thiazole + 4-amino-2-methyl-5-(diphosphooxymethyl)pyrimidine + H(+) = thiamine phosphate + diphosphate. It participates in cofactor biosynthesis; thiamine diphosphate biosynthesis; thiamine phosphate from 4-amino-2-methyl-5-diphosphomethylpyrimidine and 4-methyl-5-(2-phosphoethyl)-thiazole: step 1/1. In terms of biological role, condenses 4-methyl-5-(beta-hydroxyethyl)thiazole monophosphate (THZ-P) and 2-methyl-4-amino-5-hydroxymethyl pyrimidine pyrophosphate (HMP-PP) to form thiamine monophosphate (TMP). The polypeptide is Thiamine-phosphate synthase (Chlorobium phaeobacteroides (strain DSM 266 / SMG 266 / 2430)).